We begin with the raw amino-acid sequence, 98 residues long: Large ribosomal subunit protein uL23 (98 aa).

It belongs to the universal ribosomal protein uL23 family. As to quaternary structure, part of the 50S ribosomal subunit. Contacts protein L29, and trigger factor when it is bound to the ribosome.

In terms of biological role, one of the early assembly proteins it binds 23S rRNA. One of the proteins that surrounds the polypeptide exit tunnel on the outside of the ribosome. Forms the main docking site for trigger factor binding to the ribosome. The protein is Large ribosomal subunit protein uL23 of Streptococcus pneumoniae serotype 19F (strain G54).